The sequence spans 238 residues: DNA damage-regulated autophagy modulator protein 1 (238 aa).

Transmembrane regions (helical) follow at residues 9-29, 53-73, 91-111, 116-136, 161-181, and 200-220; these read AFVPFLLVTWSSAAFIISYVV, SGIFGFMINFSAFLGAATMYT, VFNLVSLALGLVGCIGMGIVA, LAVPVVHDGGALLAFVCGVVY, MAISAVSCAAVVPMIACASLI, and VSAICEWTVAFGFIFYFLTFI.

It belongs to the DRAM/TMEM150 family.

The protein resides in the lysosome membrane. Lysosomal modulator of autophagy that plays a central role in p53/TP53-mediated apoptosis. Not involved in p73/TP73-mediated autophagy. This Mus musculus (Mouse) protein is DNA damage-regulated autophagy modulator protein 1 (Dram1).